We begin with the raw amino-acid sequence, 161 residues long: Nucleotide-binding protein GM21_0633 (161 aa).

It belongs to the YajQ family.

In terms of biological role, nucleotide-binding protein. The polypeptide is Nucleotide-binding protein GM21_0633 (Geobacter sp. (strain M21)).